The following is a 163-amino-acid chain: Epithelial membrane protein 3 (163 aa).

A helical transmembrane segment spans residues 4-24; it reads LLLVVSALHILILVLLFVATL. N-linked (GlcNAc...) asparagine glycosylation is found at Asn46 and Asn56. The next 3 helical transmembrane spans lie at 66 to 86, 100 to 120, and 139 to 159; these read VQALMVLSLILCCLSFILFMF, TGLCQLCTSAAVFSGALIYAI, and FALAWVAFPLALVSGTVYIHL.

Belongs to the PMP-22/EMP/MP20 family.

It localises to the membrane. Functionally, probably involved in cell proliferation and cell-cell interactions. The protein is Epithelial membrane protein 3 (Emp3) of Mus musculus (Mouse).